Here is a 274-residue protein sequence, read N- to C-terminus: Orotidine 5'-phosphate decarboxylase (274 aa).

Catalysis depends on Lys-95, which acts as the Proton donor.

This sequence belongs to the OMP decarboxylase family. Type 2 subfamily.

The catalysed reaction is orotidine 5'-phosphate + H(+) = UMP + CO2. It functions in the pathway pyrimidine metabolism; UMP biosynthesis via de novo pathway; UMP from orotate: step 2/2. This chain is Orotidine 5'-phosphate decarboxylase, found in Verminephrobacter eiseniae (strain EF01-2).